The primary structure comprises 375 residues: Fluoride export protein 2 (375 aa).

Residues 1-11 (MIFNPVISNHK) are Cytoplasmic-facing. The helical transmembrane segment at 12–32 (LSHYIHVFCTFTTFCILGTET) threads the bilayer. Topologically, residues 33–34 (RQ) are extracellular. A helical transmembrane segment spans residues 35–55 (AITALSTYTPAFVTAPTVLWS). Residues 56-79 (NCSSCMLMGIMQSLNAYTWMKDHQ) lie on the Cytoplasmic side of the membrane. Residues 80-100 (VLFLGVTTGYCGALSSFSSML) form a helical membrane-spanning segment. At 101–127 (LEMFEHSTNLTNGNIANHTKLPNRAYG) the chain is on the extracellular side. Residues Asn109 and Asn117 are each glycosylated (N-linked (GlcNAc...) asparagine). The chain crosses the membrane as a helical span at residues 128 to 148 (IMEFLSVLLVHLMVSMGSLIF). Topologically, residues 149 to 213 (GRQLGKEVIV…FKKFFDVVDK (65 aa)) are cytoplasmic. The chain crosses the membrane as a helical span at residues 214–234 (LAYALAFPLIILFVVLCAYYE). Asn235 carries an N-linked (GlcNAc...) asparagine glycan. Topologically, residues 235–241 (NYSRGKW) are extracellular. A helical membrane pass occupies residues 242-262 (TLPCLFGIFAGFLRYWLAEMF). The Cytoplasmic portion of the chain corresponds to 263-268 (NKTNKK). Residues 269–289 (FPLGTFLANVFATLLIGIFTM) traverse the membrane as a helical segment. Residues 290-310 (VQRGKKHFSTDIPIVNSLNSC) are Extracellular-facing. A helical membrane pass occupies residues 311–331 (HIVSALISGFCGTLSTISTFI). The Cytoplasmic portion of the chain corresponds to 332 to 338 (NEGYKLS). A helical membrane pass occupies residues 339-359 (FINMLIYYTVSIGISYCLLVI). Residues 360–375 (TLGSYAWTRGLTNPIC) are Extracellular-facing.

The protein belongs to the fluoride channel Fluc/FEX (TC 1.A.43) family.

The protein localises to the cell membrane. The catalysed reaction is fluoride(in) = fluoride(out). In terms of biological role, fluoride channel required for the rapid expulsion of cytoplasmic fluoride. This Saccharomyces cerevisiae (strain ATCC 204508 / S288c) (Baker's yeast) protein is Fluoride export protein 2.